The primary structure comprises 635 residues: Iron transport multicopper oxidase FET3 (635 aa).

Residues 1-17 (MMVPLLLSTYFITAVYG) form the signal peptide. The Extracellular segment spans residues 18 to 559 (ATHTFHWTTG…KSIPTGFTKK (542 aa)). Plastocyanin-like domains are found at residues 42–140 (ITCN…FVIE) and 190–292 (NLIL…LQLN). Residues asparagine 70 and asparagine 73 are each glycosylated (N-linked (GlcNAc...) asparagine). Cu cation is bound by residues histidine 77 and histidine 79. Asparagine 109 carries N-linked (GlcNAc...) asparagine glycosylation. Residues histidine 122 and histidine 124 each coordinate Cu cation. Asparagine 194, asparagine 198, asparagine 244, asparagine 265, asparagine 292, and asparagine 359 each carry an N-linked (GlcNAc...) asparagine glycan. Positions 382–501 (NPFIYGTNTN…QGLAVVMVED (120 aa)) constitute a Plastocyanin-like 3 domain. Cu cation-binding residues include histidine 413, histidine 416, and histidine 418. The N-linked (GlcNAc...) asparagine glycan is linked to asparagine 443. Residues histidine 483, cysteine 484, histidine 485, and histidine 489 each contribute to the Cu cation site. N-linked (GlcNAc...) asparagine glycosylation occurs at asparagine 535. Residues 560–580 (GIIAMTFSCLAGVLGITMIAI) form a helical membrane-spanning segment. Residues 581–628 (YGFSEIPEPEIKVMRNLHLNPEDVLEKTSSSSVISASNSSSLEDSRNQ) lie on the Cytoplasmic side of the membrane.

Belongs to the multicopper oxidase family. It depends on Cu cation as a cofactor.

It localises to the cell membrane. Its function is as follows. Iron transport multicopper ferroxidase required for Fe(2+) high affinity uptake. Required to oxidize Fe(2+) and release it from the transporter. Essential component of copper-dependent iron transport. The protein is Iron transport multicopper oxidase FET3 (FET3) of Candida glabrata (strain ATCC 2001 / BCRC 20586 / JCM 3761 / NBRC 0622 / NRRL Y-65 / CBS 138) (Yeast).